The following is a 338-amino-acid chain: Heat-inducible transcription repressor HrcA (338 aa).

Belongs to the HrcA family.

Functionally, negative regulator of class I heat shock genes (grpE-dnaK-dnaJ and groELS operons). Prevents heat-shock induction of these operons. The chain is Heat-inducible transcription repressor HrcA from Nitrosomonas eutropha (strain DSM 101675 / C91 / Nm57).